A 1161-amino-acid chain; its full sequence is ATP-dependent helicase/deoxyribonuclease subunit B (1161 aa).

Belongs to the helicase family. AddB/RexB type 2 subfamily. Heterodimer of AddA and RexB. It depends on Mg(2+) as a cofactor.

Functionally, the heterodimer acts as both an ATP-dependent DNA helicase and an ATP-dependent, dual-direction single-stranded exonuclease. Recognizes the chi site generating a DNA molecule suitable for the initiation of homologous recombination. This subunit has 5' -&gt; 3' nuclease activity but not helicase activity. In Oenococcus oeni (strain ATCC BAA-331 / PSU-1), this protein is ATP-dependent helicase/deoxyribonuclease subunit B.